The chain runs to 113 residues: ATP-dependent Clp protease adapter protein ClpS (113 aa).

Residues 1–24 (MTAQLHMMSDKHDQDNDASVLLQT) form a disordered region.

Belongs to the ClpS family. In terms of assembly, binds to the N-terminal domain of the chaperone ClpA.

Involved in the modulation of the specificity of the ClpAP-mediated ATP-dependent protein degradation. The polypeptide is ATP-dependent Clp protease adapter protein ClpS (Ruegeria pomeroyi (strain ATCC 700808 / DSM 15171 / DSS-3) (Silicibacter pomeroyi)).